The following is a 432-amino-acid chain: Ornithine aminotransferase, mitochondrial (432 aa).

At lysine 287 the chain carries N6-(pyridoxal phosphate)lysine.

The protein belongs to the class-III pyridoxal-phosphate-dependent aminotransferase family. In terms of assembly, homotetramer. It depends on pyridoxal 5'-phosphate as a cofactor.

The protein localises to the mitochondrion matrix. It carries out the reaction a 2-oxocarboxylate + L-ornithine = L-glutamate 5-semialdehyde + an L-alpha-amino acid. The protein operates within amino-acid biosynthesis; L-proline biosynthesis; L-glutamate 5-semialdehyde from L-ornithine: step 1/1. In Drosophila ananassae (Fruit fly), this protein is Ornithine aminotransferase, mitochondrial (Oat).